A 381-amino-acid chain; its full sequence is Alkanesulfonate monooxygenase (381 aa).

Belongs to the SsuD family. In terms of assembly, homotetramer.

The catalysed reaction is an alkanesulfonate + FMNH2 + O2 = an aldehyde + FMN + sulfite + H2O + 2 H(+). Its function is as follows. Catalyzes the desulfonation of aliphatic sulfonates. This chain is Alkanesulfonate monooxygenase, found in Escherichia fergusonii (strain ATCC 35469 / DSM 13698 / CCUG 18766 / IAM 14443 / JCM 21226 / LMG 7866 / NBRC 102419 / NCTC 12128 / CDC 0568-73).